Here is a 292-residue protein sequence, read N- to C-terminus: NAD kinase (292 aa).

The Proton acceptor role is filled by Asp73. NAD(+) contacts are provided by residues 73–74, 147–148, His158, Arg175, Asp177, 188–193, and Gln247; these read DG, NE, and TAYSLS.

It belongs to the NAD kinase family. A divalent metal cation serves as cofactor.

It localises to the cytoplasm. The enzyme catalyses NAD(+) + ATP = ADP + NADP(+) + H(+). Functionally, involved in the regulation of the intracellular balance of NAD and NADP, and is a key enzyme in the biosynthesis of NADP. Catalyzes specifically the phosphorylation on 2'-hydroxyl of the adenosine moiety of NAD to yield NADP. The sequence is that of NAD kinase from Salmonella choleraesuis (strain SC-B67).